The chain runs to 64 residues: Translational regulator CsrA (64 aa).

The protein belongs to the CsrA/RsmA family. In terms of assembly, homodimer; the beta-strands of each monomer intercalate to form a hydrophobic core, while the alpha-helices form wings that extend away from the core.

The protein localises to the cytoplasm. A key translational regulator that binds mRNA to regulate translation initiation and/or mRNA stability. Mediates global changes in gene expression, shifting from rapid growth to stress survival by linking envelope stress, the stringent response and the catabolite repression systems. Usually binds in the 5'-UTR; binding at or near the Shine-Dalgarno sequence prevents ribosome-binding, repressing translation, binding elsewhere in the 5'-UTR can activate translation and/or stabilize the mRNA. Its function is antagonized by small RNA(s). The sequence is that of Translational regulator CsrA from Methylococcus capsulatus (strain ATCC 33009 / NCIMB 11132 / Bath).